The primary structure comprises 430 residues: RNA polymerase-associated protein LEO1 (430 aa).

Polar residues predominate over residues 1-10 (MSSSEGNSDA). Positions 1–128 (MSSSEGNSDA…SRGSLNDLQG (128 aa)) are disordered. Residues 18–30 (KSSTPSSRGSSPD) are compositionally biased toward low complexity. Over residues 99–119 (REGKPKESNTRARLSDSDAES) the composition is skewed to basic and acidic residues. Coiled-coil stretches lie at residues 326-347 (TRRE…RTQM) and 409-429 (EEYR…DEES). The interval 349 to 430 (RNNFKVRGPR…QIVTSDEESD (82 aa)) is disordered.

This sequence belongs to the LEO1 family. In terms of assembly, component of the PAF1 complex which consists of at least cdc-73, ctr-9, leo-1, pafo-1 and rtfo-1.

The protein resides in the nucleus. It is found in the cytoplasm. In terms of biological role, component of the PAF1 complex which is a multifunctional complex involved in transcription initiation via genetic interactions with TATA-binding proteins, elongation and transcription-coupled histone modification. This is RNA polymerase-associated protein LEO1 from Caenorhabditis elegans.